Consider the following 310-residue polypeptide: Aspartate carbamoyltransferase catalytic subunit (310 aa).

2 residues coordinate carbamoyl phosphate: R55 and T56. An L-aspartate-binding site is contributed by K83. Carbamoyl phosphate is bound by residues R105, H133, and Q136. R166 and R220 together coordinate L-aspartate. G261 and P262 together coordinate carbamoyl phosphate.

This sequence belongs to the aspartate/ornithine carbamoyltransferase superfamily. ATCase family. In terms of assembly, heterododecamer (2C3:3R2) of six catalytic PyrB chains organized as two trimers (C3), and six regulatory PyrI chains organized as three dimers (R2).

It catalyses the reaction carbamoyl phosphate + L-aspartate = N-carbamoyl-L-aspartate + phosphate + H(+). It participates in pyrimidine metabolism; UMP biosynthesis via de novo pathway; (S)-dihydroorotate from bicarbonate: step 2/3. Catalyzes the condensation of carbamoyl phosphate and aspartate to form carbamoyl aspartate and inorganic phosphate, the committed step in the de novo pyrimidine nucleotide biosynthesis pathway. This is Aspartate carbamoyltransferase catalytic subunit from Chlorobium phaeovibrioides (strain DSM 265 / 1930) (Prosthecochloris vibrioformis (strain DSM 265)).